Reading from the N-terminus, the 176-residue chain is Co-chaperone protein HscB homolog (176 aa).

The 73-residue stretch at 7–79 folds into the J domain; it reads THFSLFGLPE…LKRATYLLHL (73 aa).

Belongs to the HscB family. In terms of assembly, interacts with HscA and stimulates its ATPase activity.

Functionally, co-chaperone involved in the maturation of iron-sulfur cluster-containing proteins. Seems to help targeting proteins to be folded toward HscA. In Ralstonia nicotianae (strain ATCC BAA-1114 / GMI1000) (Ralstonia solanacearum), this protein is Co-chaperone protein HscB homolog.